We begin with the raw amino-acid sequence, 118 residues long: Non-specific lipid-transfer protein 1 (118 aa).

An N-terminal signal peptide occupies residues 1–25 (MASLRVSCLVALMCMVVISAPMAEA). Intrachain disulfides connect Cys29–Cys76, Cys39–Cys53, Cys54–Cys99, and Cys74–Cys113.

The protein belongs to the plant LTP family.

In terms of biological role, plant non-specific lipid-transfer proteins transfer phospholipids as well as galactolipids across membranes. May play a role in wax or cutin deposition in the cell walls of expanding epidermal cells and certain secretory tissues. This is Non-specific lipid-transfer protein 1 from Lens culinaris (Lentil).